Reading from the N-terminus, the 180-residue chain is ATP-dependent protease subunit HslV (180 aa).

The active site involves T5. Na(+) is bound by residues G161, C164, and T167.

Belongs to the peptidase T1B family. HslV subfamily. In terms of assembly, a double ring-shaped homohexamer of HslV is capped on each side by a ring-shaped HslU homohexamer. The assembly of the HslU/HslV complex is dependent on binding of ATP.

The protein resides in the cytoplasm. It carries out the reaction ATP-dependent cleavage of peptide bonds with broad specificity.. Its activity is regulated as follows. Allosterically activated by HslU binding. Its function is as follows. Protease subunit of a proteasome-like degradation complex believed to be a general protein degrading machinery. This is ATP-dependent protease subunit HslV from Campylobacter jejuni subsp. doylei (strain ATCC BAA-1458 / RM4099 / 269.97).